A 219-amino-acid chain; its full sequence is Cytidylate kinase (219 aa).

9 to 17 contributes to the ATP binding site; that stretch reads GPAGSGKTT.

It belongs to the cytidylate kinase family. Type 1 subfamily.

It localises to the cytoplasm. The catalysed reaction is CMP + ATP = CDP + ADP. It carries out the reaction dCMP + ATP = dCDP + ADP. This chain is Cytidylate kinase, found in Fervidobacterium nodosum (strain ATCC 35602 / DSM 5306 / Rt17-B1).